The sequence spans 272 residues: Shikimate dehydrogenase (NADP(+)) (272 aa).

Shikimate is bound by residues T20–S22 and T67. Residue K71 is the Proton acceptor of the active site. E83 serves as a coordination point for NADP(+). Shikimate contacts are provided by N92 and D107. Residues G129–A133, N153–K158, and L216 contribute to the NADP(+) site. Y218 is a shikimate binding site. Residue G239 coordinates NADP(+).

This sequence belongs to the shikimate dehydrogenase family. In terms of assembly, homodimer.

It carries out the reaction shikimate + NADP(+) = 3-dehydroshikimate + NADPH + H(+). Its pathway is metabolic intermediate biosynthesis; chorismate biosynthesis; chorismate from D-erythrose 4-phosphate and phosphoenolpyruvate: step 4/7. Functionally, involved in the biosynthesis of the chorismate, which leads to the biosynthesis of aromatic amino acids. Catalyzes the reversible NADPH linked reduction of 3-dehydroshikimate (DHSA) to yield shikimate (SA). In Maridesulfovibrio salexigens (strain ATCC 14822 / DSM 2638 / NCIMB 8403 / VKM B-1763) (Desulfovibrio salexigens), this protein is Shikimate dehydrogenase (NADP(+)).